The following is a 363-amino-acid chain: Strychnine O-methyltransferase (363 aa).

Positions 204, 227, 249, 250, and 263 each coordinate S-adenosyl-L-methionine. Residue histidine 267 is the Proton acceptor of the active site.

The protein belongs to the class I-like SAM-binding methyltransferase superfamily. Cation-independent O-methyltransferase family.

The enzyme catalyses 10-hydroxystrychnine + S-adenosyl-L-methionine = beta-colubrine + S-adenosyl-L-homocysteine + H(+). The catalysed reaction is 11-demethylbrucine + S-adenosyl-L-methionine = brucine + S-adenosyl-L-homocysteine + H(+). It participates in alkaloid biosynthesis. O-methyltransferase involved in the biosynthesis of curare monoterpene indole alkaloids (MIAs), natural products such as strychnine, a neurotoxic compound used as a pesticide to control rodents, and its pharmacologically active derivatives, including brucine, used to regulate blood pressure. Curare alkaloids act as animal glycine receptor antagonists. Catalyzes the conversion of 10-OH strychnine to beta-colubrine, and of 11-deMe brucine to brucine. The polypeptide is Strychnine O-methyltransferase (Strychnos nux-vomica (Poison nut)).